Consider the following 60-residue polypeptide: Large ribosomal subunit protein uL30 (60 aa).

It belongs to the universal ribosomal protein uL30 family. In terms of assembly, part of the 50S ribosomal subunit.

The sequence is that of Large ribosomal subunit protein uL30 from Syntrophomonas wolfei subsp. wolfei (strain DSM 2245B / Goettingen).